The following is a 58-amino-acid chain: Large ribosomal subunit protein uL30 (58 aa).

It belongs to the universal ribosomal protein uL30 family. Part of the 50S ribosomal subunit.

In Vibrio campbellii (strain ATCC BAA-1116), this protein is Large ribosomal subunit protein uL30.